Consider the following 321-residue polypeptide: Ferredoxin--NADP reductase (321 aa).

FAD contacts are provided by E33, Q41, Y46, V86, L119, D277, and S318.

The protein belongs to the ferredoxin--NADP reductase type 2 family. As to quaternary structure, homodimer. It depends on FAD as a cofactor.

It carries out the reaction 2 reduced [2Fe-2S]-[ferredoxin] + NADP(+) + H(+) = 2 oxidized [2Fe-2S]-[ferredoxin] + NADPH. The chain is Ferredoxin--NADP reductase from Lactococcus lactis subsp. cremoris (strain MG1363).